Reading from the N-terminus, the 455-residue chain is MTHSQDLFDRARDVIPGGVNSPVRAFGSVGGTPRMMVKAAGPYVTDADGVEYVDLVNSWGPAILGHARPEVVQAVQDAAALGLGFGATTPAETELAELVTDRVRVAGVDGSPDRRPIEKLRLVSTGTEATMTAIRLARGFTGRDLLVKFAGHYHGHSDSLLAEAGSGVATLALPGSAGIPEAIAAQTIVVPYNDLDAVRAVIAEHGPRIAAVITEAAAANMGVVPPLPGFTAELARIAHDNGSLLISDEVLTGFRVHPAGYWGLDNAGLAADHPDAWTPDLVTYGKVIGGGLPVAALGGRADVMDHLAPLGPVYQAGTLSGNPVAVAAGLTTLRLADAGVYRALDIAADILIYAVELAFDRAGLAYSVQRAGSLFSFTFGTPPEHGITDYATVQAQETWRYPAFFHSMLDQGVSLPPSVFEAWFVSAAMDEASLDRVIRALPAAARAAAAATPPA.

Position 286 is an N6-(pyridoxal phosphate)lysine (Lys-286).

Belongs to the class-III pyridoxal-phosphate-dependent aminotransferase family. HemL subfamily. As to quaternary structure, homodimer. Requires pyridoxal 5'-phosphate as cofactor.

It is found in the cytoplasm. The catalysed reaction is (S)-4-amino-5-oxopentanoate = 5-aminolevulinate. The protein operates within porphyrin-containing compound metabolism; protoporphyrin-IX biosynthesis; 5-aminolevulinate from L-glutamyl-tRNA(Glu): step 2/2. This is Glutamate-1-semialdehyde 2,1-aminomutase from Clavibacter michiganensis subsp. michiganensis (strain NCPPB 382).